The sequence spans 264 residues: Thymidylate synthase (264 aa).

Residue R21 coordinates dUMP. H51 contributes to the (6R)-5,10-methylene-5,6,7,8-tetrahydrofolate binding site. R126–R127 contributes to the dUMP binding site. Residue C146 is the Nucleophile of the active site. Residues R166–D169, N177, and H207–Y209 each bind dUMP. (6R)-5,10-methylene-5,6,7,8-tetrahydrofolate is bound at residue D169. A263 is a (6R)-5,10-methylene-5,6,7,8-tetrahydrofolate binding site.

Belongs to the thymidylate synthase family. Bacterial-type ThyA subfamily. Homodimer.

It is found in the cytoplasm. The enzyme catalyses dUMP + (6R)-5,10-methylene-5,6,7,8-tetrahydrofolate = 7,8-dihydrofolate + dTMP. It participates in pyrimidine metabolism; dTTP biosynthesis. Its function is as follows. Catalyzes the reductive methylation of 2'-deoxyuridine-5'-monophosphate (dUMP) to 2'-deoxythymidine-5'-monophosphate (dTMP) while utilizing 5,10-methylenetetrahydrofolate (mTHF) as the methyl donor and reductant in the reaction, yielding dihydrofolate (DHF) as a by-product. This enzymatic reaction provides an intracellular de novo source of dTMP, an essential precursor for DNA biosynthesis. This chain is Thymidylate synthase, found in Shewanella baltica (strain OS155 / ATCC BAA-1091).